Here is a 189-residue protein sequence, read N- to C-terminus: GTP cyclohydrolase 1 (189 aa).

Zn(2+) contacts are provided by Cys79, His82, and Cys150.

The protein belongs to the GTP cyclohydrolase I family. Homomer.

The catalysed reaction is GTP + H2O = 7,8-dihydroneopterin 3'-triphosphate + formate + H(+). It functions in the pathway cofactor biosynthesis; 7,8-dihydroneopterin triphosphate biosynthesis; 7,8-dihydroneopterin triphosphate from GTP: step 1/1. The chain is GTP cyclohydrolase 1 from Rickettsia peacockii (strain Rustic).